We begin with the raw amino-acid sequence, 429 residues long: UDP-N-acetylglucosamine 1-carboxyvinyltransferase (429 aa).

22–23 serves as a coordination point for phosphoenolpyruvate; sequence KN. Arg93 provides a ligand contact to UDP-N-acetyl-alpha-D-glucosamine. Cys117 acts as the Proton donor in catalysis. 2-(S-cysteinyl)pyruvic acid O-phosphothioketal is present on Cys117. Residues 122 to 126, Asp307, and Val329 each bind UDP-N-acetyl-alpha-D-glucosamine; that span reads RPVDL.

This sequence belongs to the EPSP synthase family. MurA subfamily.

It localises to the cytoplasm. It carries out the reaction phosphoenolpyruvate + UDP-N-acetyl-alpha-D-glucosamine = UDP-N-acetyl-3-O-(1-carboxyvinyl)-alpha-D-glucosamine + phosphate. The protein operates within cell wall biogenesis; peptidoglycan biosynthesis. Its function is as follows. Cell wall formation. Adds enolpyruvyl to UDP-N-acetylglucosamine. The sequence is that of UDP-N-acetylglucosamine 1-carboxyvinyltransferase from Chloroherpeton thalassium (strain ATCC 35110 / GB-78).